We begin with the raw amino-acid sequence, 210 residues long: Glutathione S-transferase P (210 aa).

The region spanning 2-81 is the GST N-terminal domain; sequence PPYTIVYFPV…HLGRSLGLYG (80 aa). Tyr4 is subject to Phosphotyrosine; by EGFR. Glutathione-binding positions include Tyr8, Arg14, Trp39, Lys45, 52–53, and 65–66; these read QL and QS. In terms of domain architecture, GST C-terminal spans 83–204; it reads DQKEAALVDM…SSPDHVNRPI (122 aa). N6-succinyllysine is present on residues Lys103 and Lys116. Lys128 bears the N6-acetyllysine mark.

This sequence belongs to the GST superfamily. Pi family. As to quaternary structure, homodimer. Interacts with CDK5.

The protein localises to the cytoplasm. The protein resides in the mitochondrion. It is found in the nucleus. The enzyme catalyses RX + glutathione = an S-substituted glutathione + a halide anion + H(+). It carries out the reaction prostaglandin J2 + glutathione = prostaglandin J2-S-(R)-glutathione. The catalysed reaction is prostaglandin J2 + glutathione = prostaglandin J2-S-(S)-glutathione. It catalyses the reaction prostaglandin A2 + glutathione = prostaglandin A2-S-(S)-glutathione. The enzyme catalyses 11(S)-hydroxy-14(S),15(S)-epoxy-(5Z,8Z,12E)-eicosatrienoate + glutathione = (11S,15S)-dihydroxy-14(R)-S-glutathionyl-(5Z,8Z,12E)-eicosatrienoate. Functionally, conjugation of reduced glutathione to a wide number of exogenous and endogenous hydrophobic electrophiles. Involved in the formation of glutathione conjugates of both prostaglandin A2 (PGA2) and prostaglandin J2 (PGJ2). Participates in the formation of novel hepoxilin regioisomers. Negatively regulates CDK5 activity via p25/p35 translocation to prevent neurodegeneration. This Mesocricetus auratus (Golden hamster) protein is Glutathione S-transferase P (GSTP1).